A 354-amino-acid chain; its full sequence is Carbonic anhydrase 12 (354 aa).

An N-terminal signal peptide occupies residues 1-24 (MPRRSLHAAAVLLLVILKEQPSSP). Over 25–301 (APVNGSKWTY…VQVCTAAGLS (277 aa)) the chain is Extracellular. N28 and N80 each carry an N-linked (GlcNAc...) asparagine glycan. In terms of domain architecture, Alpha-carbonic anhydrase spans 30–289 (SKWTYFGPDG…FDERLVYTSF (260 aa)). The cysteines at positions 50 and 230 are disulfide-linked. H94 serves as the catalytic Proton donor/acceptor. Residues H119, H121, and H145 each coordinate Zn(2+). N-linked (GlcNAc...) asparagine glycosylation occurs at N162. A substrate-binding site is contributed by 226 to 227 (TT). Residues 302 to 322 (LGIILSLALAGILGICIVVVV) traverse the membrane as a helical segment. Topologically, residues 323–354 (SIWLFRRKSIKKGDNKGVIYKPATKMETEAHA) are cytoplasmic.

The protein belongs to the alpha-carbonic anhydrase family. In terms of assembly, homodimer. Requires Zn(2+) as cofactor. In terms of tissue distribution, highly expressed in colon, kidney, prostate, intestine and activated lymphocytes. Expressed at much higher levels in the renal cell cancers than in surrounding normal kidney tissue. Moderately expressed in pancreas, ovary and testis. Expressed in sweat glands and bronchiolar epithelium.

It is found in the membrane. Its subcellular location is the cell membrane. The catalysed reaction is hydrogencarbonate + H(+) = CO2 + H2O. Inhibited by coumarins, saccharin, sulfonamide derivatives such as acetazolamide (AZA), benzenesulfonamide and derivatives (4-carboxyethylbenzene-sulfonamide, 4-carboxyethylbenzene-sulfonamide ethyl ester, 4-(acetyl-2-aminoethyl)benzene-sulfonamide, 4-aminoethylbenzene-sulfonamide) and Foscarnet (phosphonoformate trisodium salt). In terms of biological role, reversible hydration of carbon dioxide. This is Carbonic anhydrase 12 from Homo sapiens (Human).